Reading from the N-terminus, the 259-residue chain is Binding partner of ACD11 1 (259 aa).

Positions 6-77 constitute an RRM domain; sequence RSVKVGNLSS…QSVIIELAPN (72 aa). The tract at residues 219 to 259 is disordered; it reads GEVGQKTKEKVEAEQPSQPAQSQQQLPEGYSPIHSSEYSKN. Low complexity predominate over residues 232–243; it reads EQPSQPAQSQQQ.

In terms of assembly, interacts with ACD11, PR1F2 and PR1F3.

The protein resides in the cytoplasm. It is found in the membrane. The polypeptide is Binding partner of ACD11 1 (BPA1) (Arabidopsis thaliana (Mouse-ear cress)).